We begin with the raw amino-acid sequence, 205 residues long: Pre-rRNA-processing protein TSR2 (205 aa).

A disordered region spans residues 144 to 205; sequence SKRVVHIEGD…LVQPKGRRKH (62 aa). Residues 152–177 are compositionally biased toward acidic residues; it reads GDDDEDDEDVEDYDDEDEDEEMDEVV.

The protein belongs to the TSR2 family. In terms of assembly, interacts with RPS26A.

It localises to the cytoplasm. It is found in the nucleus. Its function is as follows. Required for 20S pre-rRNA processing. In Saccharomyces cerevisiae (strain ATCC 204508 / S288c) (Baker's yeast), this protein is Pre-rRNA-processing protein TSR2.